The following is a 296-amino-acid chain: Guided entry of tail-anchored proteins factor CAMLG (296 aa).

Positions 1 to 79 are disordered; it reads MESMAVATDG…SDKLNSLSVP (79 aa). Residues 1–189 are Cytoplasmic-facing; the sequence is MESMAVATDG…NTTEEFDSFR (189 aa). Serine 55 bears the Phosphoserine mark. Over residues 61–72 the composition is skewed to basic and acidic residues; the sequence is SQTKSKQQDSDK. A helical membrane pass occupies residues 190 to 207; that stretch reads IFRLVGCALLALGVRAFV. Residues 208–212 lie on the Lumenal side of the membrane; sequence CKYLS. Cysteine 208 and cysteine 284 are oxidised to a cystine. Residues 213–231 traverse the membrane as a helical segment; the sequence is IFAPFLTLQLAYMGLYKYF. At 232 to 269 the chain is on the cytoplasmic side; it reads PKSEKKIKTTVLTAALLLSGIPAEVINRSMDTYSKMGE. The chain crosses the membrane as a helical span at residues 270-288; that stretch reads VFTDLCVYFFTFIFCHELL. The Lumenal portion of the chain corresponds to 289 to 296; that stretch reads DYWGSEVP.

As to quaternary structure, component of the Golgi to ER traffic (GET) complex, which is composed of GET1/WRB, CAMLG/GET2 and GET3/TRC40. Within the complex, GET1 and CAMLG form a heterotetramer which is stabilized by phosphatidylinositol binding and which binds to the GET3 homodimer. Interacts (via C-terminus) with GET1. Interacts (via N-terminus) with GET3. GET3 shows a higher affinity for CAMLG than for GET1. Interacts (via N-terminus) with TNFRSF13B/TACI (via C-terminus). In terms of assembly, (Microbial infection) Interacts with human herpes virus 8/HHV-8 protein K7; this interaction modulates intracellular calcium concentration. As to expression, ubiquitous. Highest levels in brain, testis and ovary.

The protein localises to the endoplasmic reticulum membrane. In terms of biological role, required for the post-translational delivery of tail-anchored (TA) proteins to the endoplasmic reticulum. Together with GET1/WRB, acts as a membrane receptor for soluble GET3/TRC40, which recognizes and selectively binds the transmembrane domain of TA proteins in the cytosol. Required for the stability of GET1. Stimulates calcium signaling in T cells through its involvement in elevation of intracellular calcium. Essential for the survival of peripheral follicular B cells. In Homo sapiens (Human), this protein is Guided entry of tail-anchored proteins factor CAMLG.